Reading from the N-terminus, the 429-residue chain is Serine--tRNA ligase (429 aa).

229 to 231 (TAE) contacts L-serine. ATP is bound at residue 260–262 (RSE). Residue E283 coordinates L-serine. 347-350 (EISS) contacts ATP. Residue S383 coordinates L-serine.

This sequence belongs to the class-II aminoacyl-tRNA synthetase family. Type-1 seryl-tRNA synthetase subfamily. As to quaternary structure, homodimer. The tRNA molecule binds across the dimer.

The protein localises to the cytoplasm. The catalysed reaction is tRNA(Ser) + L-serine + ATP = L-seryl-tRNA(Ser) + AMP + diphosphate + H(+). It carries out the reaction tRNA(Sec) + L-serine + ATP = L-seryl-tRNA(Sec) + AMP + diphosphate + H(+). The protein operates within aminoacyl-tRNA biosynthesis; selenocysteinyl-tRNA(Sec) biosynthesis; L-seryl-tRNA(Sec) from L-serine and tRNA(Sec): step 1/1. Functionally, catalyzes the attachment of serine to tRNA(Ser). Is also able to aminoacylate tRNA(Sec) with serine, to form the misacylated tRNA L-seryl-tRNA(Sec), which will be further converted into selenocysteinyl-tRNA(Sec). The polypeptide is Serine--tRNA ligase (Orientia tsutsugamushi (strain Boryong) (Rickettsia tsutsugamushi)).